Here is a 120-residue protein sequence, read N- to C-terminus: C-type natriuretic peptide 4 (120 aa).

Positions M1 to A22 are cleaved as a signal peptide. A propeptide spanning residues K23–K96 is cleaved from the precursor. A disulfide bond links C104 and C120.

The protein belongs to the natriuretic peptide family.

It is found in the secreted. Exhibits natriuretic and vasodepressant activity. Has cGMP-stimulating activity. May help to regulate body fluid homeostasis in a variety of aquatic environments. This chain is C-type natriuretic peptide 4, found in Takifugu rubripes (Japanese pufferfish).